A 42-amino-acid polypeptide reads, in one-letter code: Photosystem II reaction center protein J (42 aa).

The chain crosses the membrane as a helical span at residues 10-30; the sequence is IPLWLVLTIIGLAAIALLALF.

The protein belongs to the PsbJ family. In terms of assembly, PSII is composed of 1 copy each of membrane proteins PsbA, PsbB, PsbC, PsbD, PsbE, PsbF, PsbH, PsbI, PsbJ, PsbK, PsbL, PsbM, PsbT, PsbY, PsbZ, Psb30/Ycf12, at least 3 peripheral proteins of the oxygen-evolving complex and a large number of cofactors. It forms dimeric complexes.

It is found in the plastid. It localises to the chloroplast thylakoid membrane. This protein is a component of the reaction center of photosystem II. Functionally, one of the components of the core complex of photosystem II (PSII). PSII is a light-driven water:plastoquinone oxidoreductase that uses light energy to abstract electrons from H(2)O, generating O(2) and a proton gradient subsequently used for ATP formation. It consists of a core antenna complex that captures photons, and an electron transfer chain that converts photonic excitation into a charge separation. This Euglena gracilis protein is Photosystem II reaction center protein J.